Consider the following 731-residue polypeptide: MAASPVPGGGGAGAVHSSNAAGFTFDSGLEIRTRSVEQTLLPLVSQITTLINHKDNTKKSDKTLQAIQRVGQAVNLAVGRFVKVGEAIANENWDLKEEINIACIEAKQAGETIASLTDVTKRSHLESDGQVTILTDKTGVVQAARLLLSSVTKVLLLADRVVIKQIVTSRNKILATMERLEKVNSFQEFVQIFSQFGNEMVEFAHLTGDRQNDLKDEKKKARMAVARAVLEKGTMMLLTASKTCLRHPSCESAHTNKEGVFDRMRVALEKVTEIVTDCRLSGETDSSSVSIFTGIKELKVNIEALRENVCFESKENLSAALEAVLEHVEDFTDSAYTSHEHRERILELSSQARTELQQLLSVWMQTQSRKTKSAAEELELTVLKISHSLDELRRELHCTAMQLAADLLKFHADHVVLKALKVTGVEGNLEALAEYACKLSEQKEQLVETCRLLRHISGTEPLEITCIHAEETFQVTGQQIISAAETLTLHPSSKIAKENLDVFCEAWESQMSDMATLLREISDVFEGRRGERCDHLSLPKPTKNSANLKSLKPDKPDSEEQAKIAKLGLKLGLLSSDADCEIEKWEDEENEIVRHGRNMSRMAYSLYLFTRGEGPLKTSQDLIHFLEVFAAEGLKLTSSVQSFSKQLKDDDKLMLLLEINKLIPLCHQLQTITKTSLQSKVFLKVDKCITKIRSMMTLVVQLLSLCYKLLKKMENNRWGSATNKDTMDGQN.

2 positions are modified to phosphoserine: S373 and S537. The interval 535-559 (HLSLPKPTKNSANLKSLKPDKPDSE) is disordered.

This sequence belongs to the vinculin/alpha-catenin family. Interacts with ARHGEF1. Interacts with Dtna. The interaction is required for correct localization of both Ctnnal1 and Dtna.

The protein localises to the cytoplasm. The protein resides in the cytoskeleton. It localises to the cell membrane. In terms of biological role, may modulate the Rho pathway signaling by providing a scaffold for the Lbc Rho guanine nucleotide exchange factor (ARHGEF1). This chain is Alpha-catulin (Ctnnal1), found in Mus musculus (Mouse).